A 752-amino-acid chain; its full sequence is Photosystem I P700 chlorophyll a apoprotein A1 (752 aa).

Helical transmembrane passes span Ile73 to Ala96, Leu159 to His182, Leu198 to Ala222, Ile294 to Tyr312, Trp349 to Tyr372, Leu388 to Val414, Ala436 to His458, and Phe533 to Leu551. The [4Fe-4S] cluster site is built by Cys575 and Cys584. Helical transmembrane passes span His591–Trp612 and Leu666–Phe688. His677 provides a ligand contact to chlorophyll a'. Positions 685 and 693 each coordinate chlorophyll a. A phylloquinone-binding site is contributed by Trp694. The chain crosses the membrane as a helical span at residues Ala726 to Ala746.

Belongs to the PsaA/PsaB family. As to quaternary structure, the PsaA/B heterodimer binds the P700 chlorophyll special pair and subsequent electron acceptors. PSI consists of a core antenna complex that captures photons, and an electron transfer chain that converts photonic excitation into a charge separation. The cyanobacterial PSI reaction center is composed of one copy each of PsaA,B,C,D,E,F,I,J,K,L,M and X, and forms trimeric complexes. PSI electron transfer chain: 5 chlorophyll a, 1 chlorophyll a', 2 phylloquinones and 3 4Fe-4S clusters. PSI core antenna: 90 chlorophyll a, 22 carotenoids, 3 phospholipids and 1 galactolipid. P700 is a chlorophyll a/chlorophyll a' dimer, A0 is one or more chlorophyll a, A1 is one or both phylloquinones and FX is a shared 4Fe-4S iron-sulfur center. serves as cofactor.

Its subcellular location is the cellular thylakoid membrane. The enzyme catalyses reduced [plastocyanin] + hnu + oxidized [2Fe-2S]-[ferredoxin] = oxidized [plastocyanin] + reduced [2Fe-2S]-[ferredoxin]. PsaA and PsaB bind P700, the primary electron donor of photosystem I (PSI), as well as the electron acceptors A0, A1 and FX. PSI is a plastocyanin/cytochrome c6-ferredoxin oxidoreductase, converting photonic excitation into a charge separation, which transfers an electron from the donor P700 chlorophyll pair to the spectroscopically characterized acceptors A0, A1, FX, FA and FB in turn. Oxidized P700 is reduced on the lumenal side of the thylakoid membrane by plastocyanin or cytochrome c6. In Nostoc sp. (strain PCC 7120 / SAG 25.82 / UTEX 2576), this protein is Photosystem I P700 chlorophyll a apoprotein A1.